The following is a 393-amino-acid chain: uncharacterized protein (393 aa).

Residues 250–389 form the Flavodoxin-like domain; sequence AVIVYDTMYN…KCYEFGKRLA (140 aa).

This is an uncharacterized protein from Methanocaldococcus jannaschii (strain ATCC 43067 / DSM 2661 / JAL-1 / JCM 10045 / NBRC 100440) (Methanococcus jannaschii).